The sequence spans 199 residues: Ribonuclease P protein subunit p25 (199 aa).

Residues 1-11 (MENFRKVRSEE) are compositionally biased toward basic and acidic residues. Disordered stretches follow at residues 1 to 31 (MENF…FADL) and 146 to 199 (PRQL…DRTA). A Phosphoserine modification is found at S172. Positions 190-199 (PEAENEDRTA) are enriched in acidic residues.

Belongs to the histone-like Alba family. Component of nuclear RNase P and RNase MRP ribonucleoproteins. RNase P consists of a catalytic RNA moiety and 10 different protein chains; POP1, POP4, POP5, POP7, RPP14, RPP21, RPP25, RPP30, RPP38 and RPP40. Within the RNase P complex, POP1, POP7 and RPP25 form the 'finger' subcomplex, POP5, RPP14, RPP40 and homodimeric RPP30 form the 'palm' subcomplex, and RPP21, POP4 and RPP38 form the 'wrist' subcomplex. All subunits of the RNase P complex interact with the catalytic RNA. Several subunits of RNase P are also part of the RNase MRP complex. RNase MRP consists of a catalytic RNA moiety and about 8 protein subunits; POP1, POP7, RPP25, RPP30, RPP38, RPP40 and possibly also POP4 and POP5. POP7 forms a heterodimer with RPP25 that binds to the P3 stem loop of the catalytic RNA.

It localises to the nucleus. Its subcellular location is the nucleolus. Component of ribonuclease P, a ribonucleoprotein complex that generates mature tRNA molecules by cleaving their 5'-ends. Also a component of the MRP ribonuclease complex, which cleaves pre-rRNA sequences. In Mus musculus (Mouse), this protein is Ribonuclease P protein subunit p25 (Rpp25).